The sequence spans 375 residues: Chanoclavine-I aldehyde reductase ifgG (375 aa).

FMN contacts are provided by residues Pro-31–Thr-33, Ala-66, Gln-108, and His-176. Positions 176 and 179 each coordinate substrate. Tyr-181 serves as the catalytic Proton donor. Residues Lys-228, Gly-300, Gly-325–Arg-326, and Arg-326 each bind FMN. Tyr-353 lines the substrate pocket.

It belongs to the NADH:flavin oxidoreductase/NADH oxidase family. Requires FMN as cofactor.

It catalyses the reaction dihydrochanoclavine-I aldehyde + NADP(+) = chanoclavine-I aldehyde + NADPH + H(+). The protein operates within alkaloid biosynthesis; ergot alkaloid biosynthesis. Functionally, chanoclavine-I aldehyde reductase; part of the gene cluster that mediates the biosynthesis of isofumigaclavines, fungal ergot alkaloids. The tryptophan dimethylallyltransferase ifgA catalyzes the first step of ergot alkaloid biosynthesis by condensing dimethylallyl diphosphate (DMAP) and tryptophan to form 4-dimethylallyl-L-tryptophan. The second step is catalyzed by the methyltransferase ifgB that methylates 4-dimethylallyl-L-tryptophan in the presence of S-adenosyl-L-methionine, resulting in the formation of N-methyl-dimethylallyl-L-tryptophan. The catalase ifgD and the FAD-dependent oxidoreductase ifgC then transform N-methyl-dimethylallyl-L-tryptophan to chanoclavine-I which is further oxidized by ifgE in the presence of NAD(+), resulting in the formation of chanoclavine-I aldehyde. The chanoclavine-I aldehyde reductases ifgG and/or fgaOx3 reduce chanoclavine-I aldehyde to dihydrochanoclavine-I aldehyde that spontaneously dehydrates to form 6,8-dimethyl-6,7-didehydroergoline. The festuclavine dehydrogenases ifgF1 and/or ifgF2 then catalyze the reduction of 6,8-dimethyl-6,7-didehydroergoline to form festuclavine. Hydrolysis of festuclavine by a yet undetermined cytochrome P450 monooxygenase (called ifgH) then leads to the formation of isofumigaclavine B which is in turn acetylated by ifgI to isofumigaclavine A. Penicillium roqueforti has interestingly at least two sets of genes for the consumption of chanoclavine-I aldehyde on three different loci, the OYEs ifgG/fgaOx3 and the festuclavine synthase homologs ifgF1/ifgF2. The reason for the duplication of these genes is unclear, probably to ensure the conversion of chanoclavine-I aldehyde by differential gene expression under various environmental conditions. This Penicillium roqueforti (strain FM164) protein is Chanoclavine-I aldehyde reductase ifgG.